The primary structure comprises 749 residues: Myosin-binding protein 2 (749 aa).

Residues 17 to 37 form a helical membrane-spanning segment; that stretch reads ITLILVYAFLEWSLIFFILLN. A disordered region spans residues 164-184; the sequence is NLNDSQEETEEKKVPQSHEKL. A compositionally biased stretch (basic and acidic residues) spans 173–184; the sequence is EEKKVPQSHEKL. Residues 411–509 enclose the GTD-binding domain; that stretch reads LTVDKLKFEL…ELEKELEVYR (99 aa). A coiled-coil region spans residues 589-621; that stretch reads ERLSILGRLKFLEEKLTDLNNEEDDEEEAKTFE. The interval 608–640 is disordered; it reads NNEEDDEEEAKTFESNGSINGNEHIHGKETNGK. The span at 630–639 shows a compositional bias: basic and acidic residues; sequence EHIHGKETNG. Residues 676–710 adopt a coiled-coil conformation; it reads DSEKGENVTIEEEVDELYERLEALEADREFLRHCV.

Interacts with myosin XI-K and XI-1. In terms of tissue distribution, expressed in leaf epidermal cells, roots and root hairs.

It localises to the endomembrane system. Membrane-anchored myosin receptors that define a distinct, plant-specific transport vesicle compartment. This chain is Myosin-binding protein 2, found in Arabidopsis thaliana (Mouse-ear cress).